The following is a 317-amino-acid chain: N(5)-(carboxyethyl)ornithine synthase (317 aa).

Pyruvate-binding residues include arginine 15, lysine 71, and histidine 92. 172 to 177 (GSGNVS) is an NADP(+) binding site.

It belongs to the AlaDH/PNT family. CEOS subfamily. As to quaternary structure, homotetramer.

The catalysed reaction is N(5)-[1(S)-1-carboxyethyl]-L-ornithine + NADP(+) + H2O = L-ornithine + pyruvate + NADPH + H(+). Its function is as follows. Catalyzes the NADPH-dependent reductive condensation between pyruvic acid and the side chain amino group of L-ornithine to form N(5)-(L-1-carboxyethyl)-L-ornithine. To a lesser extent, can also use L-lysine as substrate (yielding N(6)-(L-1-carboxyethyl)-L-lysine), and the D-isomers of the 2 basic amino acids. Can use alpha-keto acids other than pyruvate, e.g. glyoxylate. This chain is N(5)-(carboxyethyl)ornithine synthase (ceo), found in Clostridium botulinum (strain Hall / ATCC 3502 / NCTC 13319 / Type A).